A 175-amino-acid polypeptide reads, in one-letter code: Small ribosomal subunit protein uS5 (175 aa).

An S5 DRBM domain is found at 11-74 (LSEVLVDVNR…QAAKKRMMKV (64 aa)).

It belongs to the universal ribosomal protein uS5 family. Part of the 30S ribosomal subunit. Contacts proteins S4 and S8.

Its function is as follows. With S4 and S12 plays an important role in translational accuracy. In terms of biological role, located at the back of the 30S subunit body where it stabilizes the conformation of the head with respect to the body. The chain is Small ribosomal subunit protein uS5 from Rickettsia prowazekii (strain Madrid E).